The sequence spans 51 residues: Large ribosomal subunit protein bL32c (51 aa).

The protein belongs to the bacterial ribosomal protein bL32 family.

Its subcellular location is the plastid. The protein localises to the chloroplast. The chain is Large ribosomal subunit protein bL32c from Oenothera elata subsp. hookeri (Hooker's evening primrose).